The sequence spans 494 residues: MEITKLTAIELSKKIKQKELSVEEAVKATFSAIKKREPYYHSYITVNEEEALEQASKIQIAIEAGKFADSPLAGVPIAIKDNICVKGMRTTCASKILEDFIPPYNASVIERLKDAGAIILGKTNMDEFAMGSTTETSYFGATKNPWNIECIPGGSSGGSAAAVAAEEAFIALGTDTGGSIRQPSAFCGVTGIKPTYGTVSRYGLVAYASSLDQIGPIARSVSDCAATLQVISGADDKDSTCVKAASYDYVSALRSDVRGLRIGIPRGYFSEGLDAEVKKHVLEAAAFFKEQGAIVEEFDLEAVDYATPAYYVIASAEASSNLSRYDGVKYGYRTADFDGLQELYKKTRSEGFGEEVKRRMMIGSFVLSSGYYDAYYNKALKVRALIKQSFDRAFERFDIILGPTTPAAARKLGQSLFNPVKMFLGDIYTVSVNLAGLPAISLPCGLSEESSSDKSAGMPIGLQLIGKPFGEKDIIRAAYTLEQTKIYQRPKLID.

Active-site charge relay system residues include K80 and S155. S179 serves as the catalytic Acyl-ester intermediate.

This sequence belongs to the amidase family. GatA subfamily. Heterotrimer of A, B and C subunits.

The enzyme catalyses L-glutamyl-tRNA(Gln) + L-glutamine + ATP + H2O = L-glutaminyl-tRNA(Gln) + L-glutamate + ADP + phosphate + H(+). Allows the formation of correctly charged Gln-tRNA(Gln) through the transamidation of misacylated Glu-tRNA(Gln) in organisms which lack glutaminyl-tRNA synthetase. The reaction takes place in the presence of glutamine and ATP through an activated gamma-phospho-Glu-tRNA(Gln). This Lachnoclostridium phytofermentans (strain ATCC 700394 / DSM 18823 / ISDg) (Clostridium phytofermentans) protein is Glutamyl-tRNA(Gln) amidotransferase subunit A.